Reading from the N-terminus, the 256-residue chain is Na(+)-translocating NADH-quinone reductase subunit C (256 aa).

Residues 12–32 (LGVVIGLSLVCSIIVSTAAVG) form a helical membrane-spanning segment. Threonine 224 is subject to FMN phosphoryl threonine.

The protein belongs to the NqrC family. In terms of assembly, composed of six subunits; NqrA, NqrB, NqrC, NqrD, NqrE and NqrF. The cofactor is FMN.

The protein resides in the cell inner membrane. The catalysed reaction is a ubiquinone + n Na(+)(in) + NADH + H(+) = a ubiquinol + n Na(+)(out) + NAD(+). This reaction is tightly coupled to the Na(+) pumping activity and specifically requires Na(+) for activity. Inhibited by korormicin and 2-N-heptyl-4-hydroxyquinoline N-oxide (HQNO). Its function is as follows. NQR complex catalyzes the reduction of ubiquinone-1 to ubiquinol by two successive reactions, coupled with the transport of Na(+) ions from the cytoplasm to the periplasm. NqrA to NqrE are probably involved in the second step, the conversion of ubisemiquinone to ubiquinol. In Vibrio alginolyticus, this protein is Na(+)-translocating NADH-quinone reductase subunit C.